Reading from the N-terminus, the 259-residue chain is Chaplin-C (259 aa).

A signal peptide spans 1 to 28; it reads MRQATRKGLMTMAAATGVIAAAGGAAHA. Residues 39-79 form the Chaplin 1 domain; sequence SPGVLSGNTVQAPVHVPVNVCGNTVDVVGVLNPAMGNACAN. Positions 84–112 are enriched in gly residues; the sequence is ASGGHGGHGGHGGYGDSGGEGGSHGGSHA. Disordered stretches follow at residues 84–129 and 154–227; these read ASGG…NHVE and GNDC…ALAE. The Chaplin 2 domain occupies 119 to 159; it reads SPGVGSGNHVEVPIDVPVNVCGNSIDVVGALNPTTGNDCGN. The span at 180-189 shows a compositional bias: low complexity; the sequence is HNPGNPGNPD. An LPXTG sorting signal motif is present at residues 225 to 229; the sequence is LAETG. Pentaglycyl murein peptidoglycan amidated threonine is present on Thr228. A propeptide spans 229-259 (removed by sortase); that stretch reads GSDLPLGLALPVGAGALLAGTVLYRKARASV.

The protein belongs to the chaplin family. Long chaplin subfamily.

The protein resides in the secreted. The protein localises to the cell wall. Its function is as follows. One of 8 partially redundant surface-active proteins required for efficient formation of aerial mycelium; the short chaplins assemble into a hydrophobic, amyloidal fibrillar surface layer that envelopes and protects aerial hyphae and spores, presumably anchored to the long chaplins. Chaplins have an overlapping function with the surface-active SapB peptide; chaplins are essential on minimal medium while on rich medium both chaplins and SapB are required for efficient aerial hyphae formation. A minimal chaplin strain capable of forming aerial mycelium/hyphae on minimal medium contains ChpC, ChpE and ChpH. The strain also has restored rodlet formation on the hyphae surface. The long chaplins (ChpA, ChpB, ChpC) are not absolutely necessary for short chaplin localization or rodlet formation, but probably play a role in initiating aerial hyphae development. Chaplins are also involved in cell attachment to a hydrophobic surface. The chain is Chaplin-C from Streptomyces coelicolor (strain ATCC BAA-471 / A3(2) / M145).